The following is a 121-amino-acid chain: Small ribosomal subunit protein uS13 (121 aa).

The tract at residues 91–121 (HRRGLPVRGQKTKNNARTRKGPVKTVANKKK) is disordered.

The protein belongs to the universal ribosomal protein uS13 family. Part of the 30S ribosomal subunit. Forms a loose heterodimer with protein S19. Forms two bridges to the 50S subunit in the 70S ribosome.

Its function is as follows. Located at the top of the head of the 30S subunit, it contacts several helices of the 16S rRNA. In the 70S ribosome it contacts the 23S rRNA (bridge B1a) and protein L5 of the 50S subunit (bridge B1b), connecting the 2 subunits; these bridges are implicated in subunit movement. Contacts the tRNAs in the A and P-sites. The sequence is that of Small ribosomal subunit protein uS13 from Staphylococcus saprophyticus subsp. saprophyticus (strain ATCC 15305 / DSM 20229 / NCIMB 8711 / NCTC 7292 / S-41).